Reading from the N-terminus, the 177-residue chain is ATP synthase subunit b (177 aa).

The chain crosses the membrane as a helical span at residues 19–39; the sequence is LFPNLPNFIAHVIATIVLVVI.

Belongs to the ATPase B chain family. In terms of assembly, F-type ATPases have 2 components, F(1) - the catalytic core - and F(0) - the membrane proton channel. F(1) has five subunits: alpha(3), beta(3), gamma(1), delta(1), epsilon(1). F(0) has three main subunits: a(1), b(2) and c(10-14). The alpha and beta chains form an alternating ring which encloses part of the gamma chain. F(1) is attached to F(0) by a central stalk formed by the gamma and epsilon chains, while a peripheral stalk is formed by the delta and b chains.

It is found in the cell membrane. F(1)F(0) ATP synthase produces ATP from ADP in the presence of a proton or sodium gradient. F-type ATPases consist of two structural domains, F(1) containing the extramembraneous catalytic core and F(0) containing the membrane proton channel, linked together by a central stalk and a peripheral stalk. During catalysis, ATP synthesis in the catalytic domain of F(1) is coupled via a rotary mechanism of the central stalk subunits to proton translocation. Functionally, component of the F(0) channel, it forms part of the peripheral stalk, linking F(1) to F(0). The sequence is that of ATP synthase subunit b from Mesoplasma florum (strain ATCC 33453 / NBRC 100688 / NCTC 11704 / L1) (Acholeplasma florum).